The sequence spans 616 residues: Chaperone protein HscA (616 aa).

It belongs to the heat shock protein 70 family.

Chaperone involved in the maturation of iron-sulfur cluster-containing proteins. Has a low intrinsic ATPase activity which is markedly stimulated by HscB. Involved in the maturation of IscU. This Enterobacter sp. (strain 638) protein is Chaperone protein HscA.